The primary structure comprises 1356 residues: Tenascin-R (1356 aa).

An N-terminal signal peptide occupies residues 1 to 31 (MGIEGETVVLKNMLIGVNLILLGSMLKPSEC). The N-linked (GlcNAc...) asparagine glycan is linked to N55. A coiled-coil region spans residues 127 to 157 (CASSAQVLQELLSRIEMLEREVSVLRDQCNT). O-linked (Xyl...) (chondroitin sulfate) serine glycosylation occurs at S176. N180 and N198 each carry an N-linked (GlcNAc...) asparagine glycan. EGF-like domains lie at 188–199 (CICNEGWFGKNC), 204–230 (CPLG…GDDC), and 235–261 (CPTD…GEDC). An O-linked (Xyl...) (chondroitin sulfate) serine glycan is attached at S271. An N-linked (GlcNAc...) asparagine glycan is attached at N278. EGF-like domains follow at residues 281-292 (CLCQEGYAGEDC) and 293-324 (SQRR…PDCS). 2 disulfide bridges follow: C297-C307 and C314-C323. S302 carries O-linked (Xyl...) (chondroitin sulfate) serine glycosylation. Fibronectin type-III domains are found at residues 328-419 (PPED…TPQG), 420-504 (LQFK…TVID), 505-596 (GPTQ…IDAP), 597-686 (KNLR…TELD), 687-776 (SPRD…FRPI), 777-864 (SHLH…TGID), 865-953 (PPKN…AMDS), 954-1040 (PMDL…TLLD), and 1041-1129 (PPAN…GGRV). 3 N-linked (GlcNAc...) asparagine glycosylation sites follow: N391, N469, and N580. Phosphoserine is present on S723. N-linked (GlcNAc...) asparagine glycosylation is found at N790, N868, N873, N1034, N1044, and N1259. The region spanning 1127-1342 (GRVFSHPQDC…FVEMKMRPYI (216 aa)) is the Fibrinogen C-terminal domain.

This sequence belongs to the tenascin family. As to quaternary structure, forms oligomers. Interacts with TNC and FN1. Interacts with BCAN and ACAN in a calcium -dependent manner. Interacts with CNTN1, SCN2B, PTPRZ1, and CSPG3. Post-translationally, contains N-linked oligosaccharides, O-linked sialylated structures. Contains O-linked chondroitin sulfate glycosaminoglycans. Contains N-linked oligosaccharides with a sulfated carbohydrate structure type GalNAc-4-SO4 or HNK-1 (SO4-3-GlcUABeta1,3GalBeta1,4GlcNAc). The levels of HNK-1 rise and fall in parallel to those of TNR during postnatal development of the cerebellum. In contrast, levels of GalNAc-4-SO4 are regulated independently from those of TNR, rising late in cerebellar development and continuing into adulthood. Early in postnatal development, GalNAc-4-SO4 is found predominantly on isoform 1, whereas in the adult it is predominantly on isoform 2. Brain-specific. Expressed in oligodendrocytes and small subsets of neurons (mainly interneurons and motoneurons) of the cerebellum, hippocampus and olfactory bulb. Expressed in dorsal root ganglia.

It localises to the secreted. The protein localises to the extracellular space. Its subcellular location is the extracellular matrix. Neural extracellular matrix (ECM) protein involved in interactions with different cells and matrix components. Theses interactions can influence cellular behavior by either evoking a stable adhesion and differentiation, or repulsion and inhibition of neurite growth. Binding to cell surface gangliosides inhibits RGD-dependent integrin-mediated cell adhesion and results in an inhibition of PTK2/FAK1 (FAK) phosphorylation and cell detachment. Binding to membrane surface sulfatides results in a oligodendrocyte adhesion and differentiation. Interaction with CNTN1 induces a repulsion of neurons and an inhibition of neurite outgrowth. Interacts with SCN2B may play a crucial role in clustering and regulation of activity of sodium channels at nodes of Ranvier. TNR-linked chondroitin sulfate glycosaminoglycans are involved in the interaction with FN1 and mediates inhibition of cell adhesion and neurite outgrowth. The highly regulated addition of sulfated carbohydrate structure may modulate the adhesive properties of TNR over the course of development and during synapse maintenance. This is Tenascin-R (Tnr) from Rattus norvegicus (Rat).